Reading from the N-terminus, the 2179-residue chain is Genome polyprotein (2179 aa).

Disordered regions lie at residues 503–531 (FSKD…PTGD), 623–678 (QPQK…YPIQ), 703–738 (RAKK…GDQF), and 753–847 (EPSV…PPKM). Composition is skewed to polar residues over residues 630-642 (DTPS…QPFH) and 659-678 (TTFA…YPIQ). Residues 758 to 770 (SEDTSSQSYISTE) are compositionally biased toward polar residues. Residues 783 to 806 (SEESTQLSQLSSSSNDSPENNENT) show a composition bias toward low complexity. A compositionally biased stretch (acidic residues) spans 819 to 831 (EISEVEDEVDGMT). Residues 1112–1125 (CFTCGKIGHFSRNC) form a CCHC-type zinc finger. Asp-1226 functions as the For protease activity; shared with dimeric partner in the catalytic mechanism. A Reverse transcriptase domain is found at 1409–1591 (QQFDLIEPSD…NKIQFLGMDF (183 aa)). Mg(2+) contacts are provided by Asp-1479, Asp-1542, and Asp-1543. Disordered stretches follow at residues 1822 to 1848 (QRRT…KLSH), 2114 to 2144 (NIVK…KNKC), and 2160 to 2179 (YSTK…EPCV). A compositionally biased stretch (low complexity) spans 1827–1840 (SSSTKSKADSSQST). The segment covering 2120–2144 (PRKRKGKAKSRSSTRSEKRRAKNKC) has biased composition (basic residues). The segment covering 2162–2179 (TKPSTPSWTQDSSSEPCV) has biased composition (polar residues).

Belongs to the Petuviruses genome polyprotein family.

The catalysed reaction is DNA(n) + a 2'-deoxyribonucleoside 5'-triphosphate = DNA(n+1) + diphosphate. Its function is as follows. Encodes presumably for at least four polypeptides: Movement protein (MP), capsid protein (CP), Protease (PR), and reverse transcriptase (RT). This chain is Genome polyprotein, found in Petunia vein clearing virus (isolate Shepherd) (PVCV).